A 429-amino-acid polypeptide reads, in one-letter code: Serine--tRNA ligase (429 aa).

236–238 is an L-serine binding site; that stretch reads TAE. Residue 267–269 participates in ATP binding; the sequence is RSE. Glu290 is a binding site for L-serine. Residue 354–357 coordinates ATP; sequence EISS. Ser390 contacts L-serine.

This sequence belongs to the class-II aminoacyl-tRNA synthetase family. Type-1 seryl-tRNA synthetase subfamily. Homodimer. The tRNA molecule binds across the dimer.

It localises to the cytoplasm. The enzyme catalyses tRNA(Ser) + L-serine + ATP = L-seryl-tRNA(Ser) + AMP + diphosphate + H(+). The catalysed reaction is tRNA(Sec) + L-serine + ATP = L-seryl-tRNA(Sec) + AMP + diphosphate + H(+). It functions in the pathway aminoacyl-tRNA biosynthesis; selenocysteinyl-tRNA(Sec) biosynthesis; L-seryl-tRNA(Sec) from L-serine and tRNA(Sec): step 1/1. Functionally, catalyzes the attachment of serine to tRNA(Ser). Is also able to aminoacylate tRNA(Sec) with serine, to form the misacylated tRNA L-seryl-tRNA(Sec), which will be further converted into selenocysteinyl-tRNA(Sec). In Alcanivorax borkumensis (strain ATCC 700651 / DSM 11573 / NCIMB 13689 / SK2), this protein is Serine--tRNA ligase.